The following is a 236-amino-acid chain: Pyridoxine 5'-phosphate synthase (236 aa).

N6 is a binding site for 3-amino-2-oxopropyl phosphate. A 1-deoxy-D-xylulose 5-phosphate-binding site is contributed by 8–9 (DH). R17 is a 3-amino-2-oxopropyl phosphate binding site. H42 (proton acceptor) is an active-site residue. 2 residues coordinate 1-deoxy-D-xylulose 5-phosphate: R44 and H49. Residue E69 is the Proton acceptor of the active site. T99 contributes to the 1-deoxy-D-xylulose 5-phosphate binding site. H192 acts as the Proton donor in catalysis. Residues G193 and 216-217 (GH) each bind 3-amino-2-oxopropyl phosphate.

The protein belongs to the PNP synthase family. As to quaternary structure, homooctamer; tetramer of dimers.

Its subcellular location is the cytoplasm. The enzyme catalyses 3-amino-2-oxopropyl phosphate + 1-deoxy-D-xylulose 5-phosphate = pyridoxine 5'-phosphate + phosphate + 2 H2O + H(+). It functions in the pathway cofactor biosynthesis; pyridoxine 5'-phosphate biosynthesis; pyridoxine 5'-phosphate from D-erythrose 4-phosphate: step 5/5. Its function is as follows. Catalyzes the complicated ring closure reaction between the two acyclic compounds 1-deoxy-D-xylulose-5-phosphate (DXP) and 3-amino-2-oxopropyl phosphate (1-amino-acetone-3-phosphate or AAP) to form pyridoxine 5'-phosphate (PNP) and inorganic phosphate. This Aquifex pyrophilus protein is Pyridoxine 5'-phosphate synthase.